The sequence spans 104 residues: uncharacterized protein (104 aa).

An HIT domain is found at 3 to 104 (VFEKIIQGEI…HFHILSGDKH (102 aa)). The Histidine triad motif motif lies at 93 to 97 (HLHFH).

This is an uncharacterized protein from Helicobacter pylori (strain J99 / ATCC 700824) (Campylobacter pylori J99).